A 263-amino-acid polypeptide reads, in one-letter code: Neuferricin (263 aa).

A signal peptide spans 1 to 22 (MLRICGLGVVLSLAVAAVAVMA). Residues 35–134 (IRLFLPEELA…KNYVFVGRLV (100 aa)) form the Cytochrome b5 heme-binding domain. Residues 220–249 (VRTTGPPSDQQDNPRHSNHGDLDNPNLEEY) form a disordered region. Positions 231-241 (DNPRHSNHGDL) are enriched in basic and acidic residues.

It belongs to the cytochrome b5 family. MAPR subfamily. As to expression, expressed in various tissues including brain, heart, adrenal gland, and kidney. In the brain, mainly expressed in pyramidal cells around the CA3 region of Ammon horn in hippocampus. Present in brain (at protein level).

It localises to the secreted. Functionally, heme-binding protein which promotes neuronal but not astrocyte differentiation. The sequence is that of Neuferricin from Mus musculus (Mouse).